Consider the following 215-residue polypeptide: Sodium channel regulatory subunit beta-2 (215 aa).

The first 29 residues, 1–29 (MHRDAWLPRPAFSLTGLSLFFSLVPSGRS), serve as a signal peptide directing secretion. At 30–157 (MEVTVPTTLS…LEVPPERDST (128 aa)) the chain is on the extracellular side. Residues 32–154 (VTVPTTLSVL…QVLLEVPPER (123 aa)) enclose the Ig-like C2-type domain. N-linked (GlcNAc...) asparagine glycans are attached at residues asparagine 42, asparagine 66, and asparagine 74. 2 disulfides stabilise this stretch: cysteine 50-cysteine 127 and cysteine 72-cysteine 75. The helical transmembrane segment at 158–179 (VAVIVGASVGGFLAVVILVLMV) threads the bilayer. Residues 180–215 (VKCVRRKKEQKLSTDDLKTEEEGKTDGEGNAEDGAK) lie on the Cytoplasmic side of the membrane. The tract at residues 187–215 (KEQKLSTDDLKTEEEGKTDGEGNAEDGAK) is disordered. Over residues 189–215 (QKLSTDDLKTEEEGKTDGEGNAEDGAK) the composition is skewed to basic and acidic residues. Serine 192 carries the phosphoserine modification. At threonine 204 the chain carries Phosphothreonine.

This sequence belongs to the sodium channel auxiliary subunit SCN2B (TC 8.A.17) family. As to quaternary structure, a voltage-gated sodium (Nav) channel consists of an ion-conducting pore-forming alpha subunit functional on its own that is regulated by one or more beta subunits. The beta subunit SCN2B is disulfide-linked to the pore-forming alpha subunit. Interacts with SCN1A; regulatory subunit of SCN1A/Nav1.1. Interacts with SCN2A; regulatory subunit of SCN2A/Nav1.2. Interacts with SCN3A; regulatory subunit of SCN3A/Nav1.3. Interacts with SCN5A; regulatory subunit of SCN5A/Nav1.5. Interacts with SCN8A; regulatory subunit of SCN8A/Nav1.6. Interacts with SCN9A; regulatory subunit of SCN9A/Nav1.7. Interacts with SCN10A; regulatory subunit of SCN10A/Nav1.8. Interacts with TNR; may play a crucial role in clustering and regulation of activity of SCN2B-containing Nav channels at nodes of Ranvier.

The protein localises to the cell membrane. It localises to the cell projection. It is found in the axon. Functionally, regulatory subunit of multiple voltage-gated sodium (Nav) channels directly mediating the depolarization of excitable membranes. Navs, also called VGSCs (voltage-gated sodium channels) or VDSCs (voltage-dependent sodium channels), operate by switching between closed and open conformations depending on the voltage difference across the membrane. In the open conformation they allow Na(+) ions to selectively pass through the pore, along their electrochemical gradient. The influx of Na+ ions provokes membrane depolarization, initiating the propagation of electrical signals throughout cells and tissues. The accessory beta subunits participate in localization and functional modulation of the Nav channels. Modulates the activity of SCN1A/Nav1.1, SCN2A/Nav1.2, SCN2A/Nav1.3, SCN5A/Nav1.5, SCN8A/Nav1.6, SCN9A/Nav1.7 and SCN10A/Nav1.8. The protein is Sodium channel regulatory subunit beta-2 of Rattus norvegicus (Rat).